The following is a 59-amino-acid chain: SPbeta prophage-derived uncharacterized protein YosB (59 aa).

The sequence is that of SPbeta prophage-derived uncharacterized protein YosB (yosB) from Bacillus subtilis (strain 168).